The chain runs to 260 residues: COP9 signalosome complex subunit 7 (260 aa).

The 159-residue stretch at 1-159 (MDIEQKQAEI…RCFEVPFAAG (159 aa)) folds into the PCI domain. The segment at 228–260 (IRGNKEMFGEPSGVMDYEEDGIRPKRRRHPVTR) is disordered. Over residues 251–260 (PKRRRHPVTR) the composition is skewed to basic residues.

Belongs to the CSN7/EIF3M family. CSN7 subfamily. Component of the CSN complex, probably composed of CSN1, CSN2, CSN3, CSN4, CSN5 (CSN5A or CSN5B), CSN6 (CSN6A or CSN6B), CSN7 and CSN8. In the CSN complex, it probably interacts directly with CSN4. Interacts (via PCI domain) with CSN1 (via PCI domain) and CSN8 (via PCI domain), and (via C-terminal tail) with CSN6A, TSO2 and RNR2A. Cannot interact simultaneously with CSN1 and CSN8 to form ternary complexes. Also exists as a monomeric form. Binds to the translation initiation factors TIF3E1 and TIF3H1. Post-translationally, phosphorylated.

The protein resides in the cytoplasm. The protein localises to the nucleus. Its function is as follows. Component of the COP9 signalosome complex (CSN), a complex involved in various cellular and developmental processes such as photomorphogenesis and auxin and jasmonate responses. The CSN complex is an essential regulator of the ubiquitin (Ubl) conjugation pathway by mediating the deneddylation of the cullin subunits of SCF-type E3 ligase complexes, leading to decrease the Ubl ligase activity of SCF. It is involved in repression of photomorphogenesis in darkness by regulating the activity of COP1-containing Ubl ligase complexes. The complex is also required for degradation of IAA6 by regulating the activity of the Ubl ligase SCF-TIR complex. Regulates the TSO2 subcellular localization. May be involved in nucleic acid binding. This Arabidopsis thaliana (Mouse-ear cress) protein is COP9 signalosome complex subunit 7 (CSN7).